Here is a 359-residue protein sequence, read N- to C-terminus: Hsp70-binding protein 1 (359 aa).

The interval 1–71 (MSDEGSRGSR…PPPEPMSEER (71 aa)) is disordered. Over residues 23–37 (SSGGGGGGSSAGGSG) the composition is skewed to gly residues. ARM repeat units follow at residues 132–174 (ENMD…TCSQ), 177–217 (AAIQ…CLVR), 220–259 (EAGL…NLLV), and 262–301 (PEHK…SLVT). 2 positions are modified to phosphoserine: serine 351 and serine 356.

As to quaternary structure, interacts with the ATP-binding domain of HSPA1A. Detected in a ternary complex containing STUB1, HSPA1A and HSPBP1. Interacts with PGLYRP1; this interaction blocks the cytotoxic activity of the PGLYRP1-HSPA1A complex. As to expression, ubiquitous.

Inhibits HSPA1A chaperone activity by changing the conformation of the ATP-binding domain of HSPA1A and interfering with ATP binding. Interferes with ubiquitination mediated by STUB1 and inhibits chaperone-assisted degradation of immature CFTR. The protein is Hsp70-binding protein 1 of Homo sapiens (Human).